Here is a 289-residue protein sequence, read N- to C-terminus: Protein FraH (289 aa).

A DZANK-type zinc finger spans residues 4-49; sequence CPNCNHPNPDGAVQCEACYTPLPATSNCPNCGATVQSDAAFCGQCG. Residues 18–48 fold into a zinc finger; the sequence is CEACYTPLPATSNCPNCGATVQSDAAFCGQC. An FHA domain is found at 204–260; it reads VHIGKPNDRIPPDVDVSGFANSEIVSRVHADIRLEGDAHYIEDVGSSNGTYINNLPL.

Its function is as follows. Putative heterocyst to vegetative cell connection. This is Protein FraH (fraH) from Nostoc sp. (strain PCC 7120 / SAG 25.82 / UTEX 2576).